Consider the following 285-residue polypeptide: Secreted alkaline triacylglycerol lipase (285 aa).

An N-terminal signal peptide occupies residues 1-20; it reads MLFNYQSLLVGVSLISQALS. The Nucleophile role is filled by S159. Residues D215 and H268 each act as charge relay system in the active site.

It belongs to the AB hydrolase superfamily. FaeA family.

The protein resides in the secreted. The catalysed reaction is a triacylglycerol + H2O = a diacylglycerol + a fatty acid + H(+). Secreted alkaline lipase that hydrolyzes acylglycerol lipids such as triacylglycerols and consequently releases free fatty acid. Is able to hydrolyze tributyrin (1,2,3-tributyryl-glycerin). In Penicillium cyclopium, this protein is Secreted alkaline triacylglycerol lipase.